The primary structure comprises 397 residues: Proteinase-activated receptor 2 (397 aa).

A signal peptide spans Met1 to Thr25. Residue Asn23 is glycosylated (N-linked (GlcNAc...) asparagine). The propeptide at Val26 to Arg36 is removed for receptor activation. At Ser37–Gly71 the chain is on the extracellular side. A helical membrane pass occupies residues Lys72–Phe101. Residues Phe102–His108 lie on the Cytoplasmic side of the membrane. Residues Pro109–His137 traverse the membrane as a helical segment. Residues Gly138–Lys149 lie on the Extracellular side of the membrane. The cysteines at positions 148 and 226 are disulfide-linked. A helical transmembrane segment spans residues Val150 to Ile177. Over Val178–His183 the chain is Cytoplasmic. Residues Ser184–Val211 traverse the membrane as a helical segment. The Extracellular segment spans residues Met212–Leu235. Asn222 is a glycosylation site (N-linked (GlcNAc...) asparagine). A helical membrane pass occupies residues Val236 to Leu269. Residues Arg270–His277 lie on the Cytoplasmic side of the membrane. The chain crosses the membrane as a helical span at residues Ser278–Gln317. Residues Arg318–Tyr323 are Extracellular-facing. A helical transmembrane segment spans residues Ala324–Val347. Over Ser348–Tyr397 the chain is Cytoplasmic. Cys361 carries S-palmitoyl cysteine lipidation.

It belongs to the G-protein coupled receptor 1 family. As to quaternary structure, interacts with TLR4, COPS5 and TMED2. Interacts with GNAQ, GNA11, GNA12, GNA13 and GNA14. In terms of processing, a proteolytic cleavage generates a new N-terminus that functions as a tethered ligand. Activating serine proteases include trypsin, mast cell tryptase, coagulation factors VII and Xa, myeloblastin/PRTN3 and membrane-type serine protease 1/ST14. Proposed subsequent cleavage by serine proteases is leading to receptor deactivation and include neutrophil elastase and cathepsin G. At least in part, implicated proteases are also shown to activate the receptor; the glycosylation status of the receptor is thought to contribute to the difference. Post-translationally, N-glycosylated and sialylated. Multiple phosphorylated on serine and threonine residues in the cytoplasmic region upon receptor activation; required for receptor desensitization and recruitment of beta-arrestin. In terms of processing, monoubiquitinated by Cbl at the plasma membrane and in early endosomes; not required for receptor endocytosis but for translocation to late endosomes or lysosomes. Deubiquitination involves Stambp and Usp8; required for lysosomal trafficking and receptor degradation.

The protein resides in the cell membrane. Its function is as follows. Receptor for trypsin and trypsin-like enzymes coupled to G proteins. Its function is mediated through the activation of several signaling pathways including phospholipase C (PLC), intracellular calcium, mitogen-activated protein kinase (MAPK), I-kappaB kinase/NF-kappaB and Rho. Can also be transactivated by cleaved F2R/PAR1. Involved in modulation of inflammatory responses and regulation of innate and adaptive immunity, and acts as a sensor for proteolytic enzymes generated during infection. Generally is promoting inflammation. Can signal synergistically with TLR4 and probably TLR2 in inflammatory responses and modulates Tlr3 signaling. Has a protective role in establishing the endothelial barrier; the activity involves coagulation factor X. Regulates endothelial cell barrier integrity during neutrophil extravasation, probably following proteolytic cleavage by PRTN3. Proposed to have a bronchoprotective role in airway epithelium, but also shown to compromise the airway epithelial barrier by interrupting E-cadherin adhesion. Involved in the regulation of vascular tone; activation results in hypotension presumably mediated by vasodilation. Associates with a subset of G proteins alpha subunits such as GNAQ, GNA11, GNA14, GNA12 and GNA13, but probably not with G(o)-alpha, G(i) subunit alpha-1 and G(i) subunit alpha-2. Believed to be a class B receptor which internalizes as a complex with arrestin and traffic with it to endosomal vesicles, presumably as desensitized receptor, for extended periods of time. Mediates inhibition of TNF-alpha stimulated JNK phosphorylation via coupling to G GNAQ and GNA11; the function involves dissociation of RIPK1 and Tradd from TNFR1. Mediates phosphorylation of nuclear factor NF-kappa-B RELA subunit at 'Ser-536'; the function involves Ikbkb and is predominantly independent of G proteins. Involved in cellular migration. Involved in cytoskeletal rearrangement and chemotaxis through beta-arrestin-promoted scaffolds; the function is independent of GNAQ and GNA11 and involves promotion of cofilin dephosphorylation and actin filament severing. Induces redistribution of COPS5 from the plasma membrane to the cytosol and activation of the JNK cascade is mediated by Cops5. Involved in the recruitment of leukocytes to the sites of inflammation and is the major PAR receptor capable of modulating eosinophil function such as pro-inflammatory cytokine secretion, superoxide production and degranulation. During inflammation promotes dendritic cell maturation, trafficking to the lymph nodes and subsequent T-cell activation. Involved in antimicrobial response of innate immune cells; activation enhances phagocytosis of Gram-positive and killing of Gram-negative bacteria. Acts synergistically with interferon-gamma in enhancing antiviral responses. Probably mediates activation of pro-inflammatory and pro-fibrotic responses in fibroblasts, triggered by coagulation factor Xa (F10). Probably mediates activation of barrier protective signaling responses in endothelial cells, triggered by coagulation factor Xa (F10). This is Proteinase-activated receptor 2 (F2rl1) from Rattus norvegicus (Rat).